A 581-amino-acid polypeptide reads, in one-letter code: MDSSTTIPITPTRTPCFFNISSSFNEHSPLNFYDEPIYNFSSGHEENQSHKSSKLTFFKPSNTKRSPHTPMQNNAKAIRLSTTVRHGIFKNSDLDGCSKPFAFSSGLKLSKKIVDASTPIDLKRKRAVTSLSTGLLSKREKWSLWEGNLTNPRSEQPHTPCKKGTKIKLKPPQSPLSPTTSLLARKCKHIDLDTFSRLDHPNSDSSDETFEMEELPSLSYGSEDLLEFCETPCKSQPIFLSSSHVNNWDEKDVPSSLSWTPTSPIFLNINSADDYEEEEDWTSDLRIRFQQVKPIHESDFSFVYHVSSINPPTETVYVVKMLKKNAAKFTGKERHLQEVSILQRLQACPFVVNLVNVWSYNDNIFLQLDYCENGDLSLFLSELGLLQVMDPFRVWKMLFQLTQALNFIHLLEFVHLDVKPSNVLITRDGNLKLGDFGLATSLPVSSMVDLEGDRVYIAPEILASHNYGKPADVYSLGLSMIEAATNVVLPENGVEWQRLRSGDYSNLPNLKDLLLSKEKVQINKVRCAESLQCLLQRMTHPYVDCRPTTQDLLAMPEMIFISEHSQKAAIIYEDHNSWLET.

Disordered regions lie at residues 43 to 71 (GHEENQSHKSSKLTFFKPSNTKRSPHTPM) and 148 to 178 (NLTNPRSEQPHTPCKKGTKIKLKPPQSPLSP). Polar residues predominate over residues 59-71 (KPSNTKRSPHTPM). Positions 160–169 (PCKKGTKIKL) are enriched in basic residues. In terms of domain architecture, Protein kinase spans 289–561 (FQQVKPIHES…LLAMPEMIFI (273 aa)). ATP contacts are provided by residues 295-303 (IHESDFSFV) and Lys-320. Residue Asp-417 is the Proton acceptor of the active site. Mg(2+)-binding residues include Asn-422 and Asp-435.

It belongs to the protein kinase superfamily. Ser/Thr protein kinase family. WEE1 subfamily.

It catalyses the reaction L-seryl-[protein] + ATP = O-phospho-L-seryl-[protein] + ADP + H(+). The enzyme catalyses L-threonyl-[protein] + ATP = O-phospho-L-threonyl-[protein] + ADP + H(+). In terms of biological role, protein kinase that acts both on serines and on tyrosines. It acts as a negative regulator of entry into mitosis (G2 to M transition). Phosphorylates and inhibits cdc2. This Schizosaccharomyces pombe (strain 972 / ATCC 24843) (Fission yeast) protein is Mitosis inhibitor protein kinase mik1 (mik1).